Reading from the N-terminus, the 556-residue chain is Protein misato homolog 1 (556 aa).

Serine 41 bears the Phosphoserine mark.

This sequence belongs to the misato family.

The protein resides in the mitochondrion outer membrane. The protein localises to the cytoplasm. Functionally, involved in the regulation of mitochondrial distribution and morphology. Required for mitochondrial fusion and mitochondrial network formation. This chain is Protein misato homolog 1 (Msto1), found in Mus musculus (Mouse).